Consider the following 128-residue polypeptide: Large ribosomal subunit protein bL17 (128 aa).

It belongs to the bacterial ribosomal protein bL17 family. As to quaternary structure, part of the 50S ribosomal subunit. Contacts protein L32.

This Haemophilus influenzae (strain 86-028NP) protein is Large ribosomal subunit protein bL17.